Consider the following 367-residue polypeptide: Putative 12-oxophytodienoate reductase 11 (367 aa).

Residues 26 to 28, alanine 59, and glutamine 101 each bind FMN; that span reads PLT. 178–181 provides a ligand contact to substrate; it reads HGAH. Tyrosine 183 serves as the catalytic Proton donor. Arginine 230 is an FMN binding site. A substrate-binding site is contributed by arginine 270. Residues glycine 300 and 321-322 contribute to the FMN site; that span reads GR.

This sequence belongs to the NADH:flavin oxidoreductase/NADH oxidase family. Requires FMN as cofactor.

Its function is as follows. Putative oxophytodienoate reductase that may be involved in the biosynthesis or metabolism of oxylipin signaling molecules. The chain is Putative 12-oxophytodienoate reductase 11 (OPR11) from Oryza sativa subsp. japonica (Rice).